Consider the following 332-residue polypeptide: Tetraacyldisaccharide 4'-kinase (332 aa).

60–67 (TVGGTGKT) contacts ATP.

The protein belongs to the LpxK family.

It catalyses the reaction a lipid A disaccharide + ATP = a lipid IVA + ADP + H(+). It functions in the pathway glycolipid biosynthesis; lipid IV(A) biosynthesis; lipid IV(A) from (3R)-3-hydroxytetradecanoyl-[acyl-carrier-protein] and UDP-N-acetyl-alpha-D-glucosamine: step 6/6. Functionally, transfers the gamma-phosphate of ATP to the 4'-position of a tetraacyldisaccharide 1-phosphate intermediate (termed DS-1-P) to form tetraacyldisaccharide 1,4'-bis-phosphate (lipid IVA). This is Tetraacyldisaccharide 4'-kinase from Pseudomonas aeruginosa (strain LESB58).